The primary structure comprises 155 residues: 2-C-methyl-D-erythritol 2,4-cyclodiphosphate synthase (155 aa).

Residues Asp-8 and His-10 each contribute to the a divalent metal cation site. 4-CDP-2-C-methyl-D-erythritol 2-phosphate contacts are provided by residues Asp-8 to His-10 and His-34 to Ser-35. Residue His-42 participates in a divalent metal cation binding. 4-CDP-2-C-methyl-D-erythritol 2-phosphate is bound by residues Asp-56 to Gly-58, Phe-61 to Asp-65, Ala-100 to Leu-106, Thr-132 to Glu-135, Phe-139, and Lys-142.

The protein belongs to the IspF family. As to quaternary structure, homotrimer. It depends on a divalent metal cation as a cofactor.

It carries out the reaction 4-CDP-2-C-methyl-D-erythritol 2-phosphate = 2-C-methyl-D-erythritol 2,4-cyclic diphosphate + CMP. Its pathway is isoprenoid biosynthesis; isopentenyl diphosphate biosynthesis via DXP pathway; isopentenyl diphosphate from 1-deoxy-D-xylulose 5-phosphate: step 4/6. In terms of biological role, involved in the biosynthesis of isopentenyl diphosphate (IPP) and dimethylallyl diphosphate (DMAPP), two major building blocks of isoprenoid compounds. Catalyzes the conversion of 4-diphosphocytidyl-2-C-methyl-D-erythritol 2-phosphate (CDP-ME2P) to 2-C-methyl-D-erythritol 2,4-cyclodiphosphate (ME-CPP) with a corresponding release of cytidine 5-monophosphate (CMP). The chain is 2-C-methyl-D-erythritol 2,4-cyclodiphosphate synthase from Clostridium botulinum (strain 657 / Type Ba4).